Consider the following 389-residue polypeptide: Acetyl-CoA decarbonylase/synthase complex subunit delta (389 aa).

The protein belongs to the CdhD family. As to quaternary structure, heterodimer of delta and gamma chains. The ACDS complex is made up of alpha, epsilon, beta, gamma and delta chains with a probable stoichiometry of (alpha(2)epsilon(2))(4)-beta(8)-(gamma(1)delta(1))(8).

In terms of biological role, part of a complex that catalyzes the reversible cleavage of acetyl-CoA, allowing autotrophic growth from CO(2). Probably maintains the overall quaternary structure of the ACDS complex. In Methanothermobacter thermautotrophicus (strain ATCC 29096 / DSM 1053 / JCM 10044 / NBRC 100330 / Delta H) (Methanobacterium thermoautotrophicum), this protein is Acetyl-CoA decarbonylase/synthase complex subunit delta.